The following is a 500-amino-acid chain: Cysteine-rich secretory protein LCCL domain-containing 1 (500 aa).

Residues 1-23 (MKCTAREWLRVTTVLFMARAIPA) form the signal peptide. The 141-residue stretch at 66–206 (LDLHNKLRSQ…PKAVYLVCNY (141 aa)) folds into the SCP domain. Over residues 254-280 (EETNEIERQQSQVHDTHVRTRSDDSSR) the composition is skewed to basic and acidic residues. Positions 254 to 281 (EETNEIERQQSQVHDTHVRTRSDDSSRN) are disordered. 2 LCCL domains span residues 289-384 (MSQI…ANSF) and 390-492 (TVQA…PGGK). Cystine bridges form between C295–C313, C317–C337, C396–C418, and C422–C445.

It belongs to the CRISP family.

Its subcellular location is the secreted. In Homo sapiens (Human), this protein is Cysteine-rich secretory protein LCCL domain-containing 1 (CRISPLD1).